Reading from the N-terminus, the 277-residue chain is Caspase-3 (277 aa).

At methionine 1 the chain carries N-acetylmethionine. 2 propeptides span residues 1 to 9 and 10 to 28; these read MENTENSVD and AKSFKNAETKILHGSKSMD. Residue lysine 11 is modified to N6-acetyllysine. Serine 26 carries the post-translational modification Phosphoserine. Residues histidine 121 and cysteine 163 contribute to the active site. An S-nitrosocysteine; in inhibited form modification is found at cysteine 163.

Belongs to the peptidase C14A family. Heterotetramer that consists of two anti-parallel arranged heterodimers, each one formed by a 17 kDa (p17) and a 12 kDa (p12) subunit. Interacts with BIRC6/bruce. In terms of processing, cleavage by granzyme B, caspase-6, caspase-8 and caspase-10 generates the two active subunits. Additional processing of the propeptides is likely due to the autocatalytic activity of the activated protease. Active heterodimers between the small subunit of caspase-7 protease and the large subunit of caspase-3 also occur and vice versa. Post-translationally, S-nitrosylated on its catalytic site cysteine in unstimulated cell lines and denitrosylated upon activation of the Fas apoptotic pathway, associated with an increase in intracellular caspase activity. Fas therefore activates caspase-3 not only by inducing the cleavage of the caspase zymogen to its active subunits, but also by stimulating the denitrosylation of its active site thiol. Ubiquitinated by BIRC6; this activity is inhibited by DIABLO/SMAC.

The protein resides in the cytoplasm. It carries out the reaction Strict requirement for an Asp residue at positions P1 and P4. It has a preferred cleavage sequence of Asp-Xaa-Xaa-Asp-|- with a hydrophobic amino-acid residue at P2 and a hydrophilic amino-acid residue at P3, although Val or Ala are also accepted at this position.. Its activity is regulated as follows. Inhibited by BIRC6; following inhibition of BIRC6-caspase binding by DIABLO/SMAC, BIRC6 is subjected to caspase cleavage, leading to an increase in active caspases. Its function is as follows. Involved in the activation cascade of caspases responsible for apoptosis execution. At the onset of apoptosis, it proteolytically cleaves poly(ADP-ribose) polymerase PARP1 at a '216-Asp-|-Gly-217' bond. Cleaves and activates sterol regulatory element binding proteins (SREBPs) between the basic helix-loop-helix leucine zipper domain and the membrane attachment domain. Cleaves and activates caspase-6, -7 and -9 (CASP6, CASP7 and CASP9, respectively). Cleaves and inactivates interleukin-18 (IL18). Triggers cell adhesion in sympathetic neurons through RET cleavage. Cleaves IL-1 beta between an Asp and an Ala, releasing the mature cytokine which is involved in a variety of inflammatory processes. Cleaves and inhibits serine/threonine-protein kinase AKT1 in response to oxidative stress. Acts as an inhibitor of type I interferon production during virus-induced apoptosis by mediating cleavage of antiviral proteins CGAS, IRF3 and MAVS, thereby preventing cytokine overproduction. Also involved in pyroptosis by mediating cleavage and activation of gasdermin-E (GSDME). Cleaves XRCC4 and phospholipid scramblase proteins XKR4, XKR8 and XKR9, leading to promote phosphatidylserine exposure on apoptotic cell surface. Cleaves BIRC6 following inhibition of BIRC6-caspase binding by DIABLO/SMAC. The sequence is that of Caspase-3 (CASP3) from Canis lupus familiaris (Dog).